A 204-amino-acid polypeptide reads, in one-letter code: uncharacterized protein (204 aa).

The protein resides in the cytoplasm. Its subcellular location is the nucleus. This is an uncharacterized protein from Schizosaccharomyces pombe (strain 972 / ATCC 24843) (Fission yeast).